Consider the following 411-residue polypeptide: Ribose-phosphate pyrophosphokinase 3, chloroplastic (411 aa).

The transit peptide at 1 to 39 directs the protein to the chloroplast; the sequence is MAAISPANATTAASLSLPQFSSTSSSLSSSSSPSFLNFK. Residues aspartate 231 and histidine 233 each coordinate Mg(2+). The segment at 314-329 is binding of phosphoribosylpyrophosphate; that stretch reads GRHVVIVDDLVQSGGT.

Belongs to the ribose-phosphate pyrophosphokinase family.

The protein resides in the plastid. It is found in the chloroplast. It catalyses the reaction D-ribose 5-phosphate + ATP = 5-phospho-alpha-D-ribose 1-diphosphate + AMP + H(+). The sequence is that of Ribose-phosphate pyrophosphokinase 3, chloroplastic (PRS3) from Arabidopsis thaliana (Mouse-ear cress).